The chain runs to 183 residues: Calcineurin subunit B type 2 (183 aa).

G2 carries N-myristoyl glycine lipidation. EF-hand domains lie at 25 to 60 (REIK…SMNP), 64 to 92 (RIIS…FHPK), 94 to 129 (DKAD…MVGS), and 135 to 170 (QISS…SGCN). The Ca(2+) site is built by D107, N109, D111, and E118.

It belongs to the calcineurin regulatory subunit family. In terms of assembly, calcineurin is composed of a catalytic subunit (A) and a regulatory subunit (B).

In terms of biological role, regulatory subunit of calcineurin, a calcium-dependent, calmodulin stimulated protein phosphatase. Confers calcium sensitivity. This Dictyostelium discoideum (Social amoeba) protein is Calcineurin subunit B type 2 (cnbB).